The primary structure comprises 254 residues: MTQLVELKEVCLSFDGRSVLDKVSFTLNKGKITTLVGPNGAGKSTLSKLVLGLLTPDSGQITRSRDLRVGYVPQRLYLDPTLPLTVRRFLQLGKNGRLSIEEALNRVGAEDLLDNRMQKLSGGEMQRVLLARALLVKPELLVLDEPVQGVDINGQIELYALISQLAAEFNCAVLMVSHDLHLVMASTHEVICLNRHVCCHGEPESVARHPEFARLFGRPEQEVLAVYTHHHHCDGEHHHHEPQVPVIRLPSRNQ.

The region spanning 5 to 219 (VELKEVCLSF…PEFARLFGRP (215 aa)) is the ABC transporter domain. 37–44 (GPNGAGKS) provides a ligand contact to ATP. Basic and acidic residues predominate over residues 233–242 (CDGEHHHHEP). The tract at residues 233–254 (CDGEHHHHEPQVPVIRLPSRNQ) is disordered.

It belongs to the ABC transporter superfamily. Zinc importer (TC 3.A.1.15.5) family. As to quaternary structure, the complex is composed of two ATP-binding proteins (ZnuC), two transmembrane proteins (ZnuB) and a solute-binding protein (ZnuA).

The protein resides in the cell inner membrane. It catalyses the reaction Zn(2+)(out) + ATP(in) + H2O(in) = Zn(2+)(in) + ADP(in) + phosphate(in) + H(+)(in). Part of the ABC transporter complex ZnuABC involved in zinc import. Responsible for energy coupling to the transport system. This is Zinc import ATP-binding protein ZnuC from Aeromonas hydrophila subsp. hydrophila (strain ATCC 7966 / DSM 30187 / BCRC 13018 / CCUG 14551 / JCM 1027 / KCTC 2358 / NCIMB 9240 / NCTC 8049).